Here is a 397-residue protein sequence, read N- to C-terminus: Tryptophan synthase beta chain (397 aa).

K87 carries the N6-(pyridoxal phosphate)lysine modification.

The protein belongs to the TrpB family. Tetramer of two alpha and two beta chains. Pyridoxal 5'-phosphate serves as cofactor.

It carries out the reaction (1S,2R)-1-C-(indol-3-yl)glycerol 3-phosphate + L-serine = D-glyceraldehyde 3-phosphate + L-tryptophan + H2O. The protein operates within amino-acid biosynthesis; L-tryptophan biosynthesis; L-tryptophan from chorismate: step 5/5. Its function is as follows. The beta subunit is responsible for the synthesis of L-tryptophan from indole and L-serine. This chain is Tryptophan synthase beta chain, found in Salmonella agona (strain SL483).